A 412-amino-acid polypeptide reads, in one-letter code: Divalent metal cation transporter MntH (412 aa).

The next 11 helical transmembrane spans lie at 19 to 39 (LALM…GNFA), 46 to 66 (ASFG…AMLI), 94 to 114 (VWFY…AEFI), 122 to 142 (LILG…TFLI), 156 to 176 (VIGG…FFSQ), 196 to 216 (AVFL…IYLH), 241 to 261 (IAMT…AAAF), 290 to 310 (IFGL…TLAG), 322 to 342 (IPLW…ILMG), 348 to 368 (ILVM…VPLL), and 392 to 412 (AIVV…ALGL).

It belongs to the NRAMP family.

Its subcellular location is the cell inner membrane. H(+)-stimulated, divalent metal cation uptake system. The sequence is that of Divalent metal cation transporter MntH from Cronobacter sakazakii (strain ATCC BAA-894) (Enterobacter sakazakii).